The sequence spans 4963 residues: Kettin homolog (4963 aa).

Ig-like domains are found at residues 18 to 105 (PTFI…TCIL), 133 to 220 (PSAP…EAIS), and 303 to 392 (PIIR…ARIE). Disordered stretches follow at residues 396–420 (LSVP…QQQQ), 466–501 (RRQL…EEER), 557–578 (IRPH…RQEV), 598–622 (QLYQ…QQRF), and 652–696 (TNGG…GHEH). 3 stretches are compositionally biased toward basic and acidic residues: residues 399 to 417 (PDER…RDRQ), 466 to 475 (RRQLEHEKRL), and 484 to 501 (FERE…EEER). Residues 401-517 (ERRKENQLRE…KHLRQQQQTQ (117 aa)) are a coiled coil. Low complexity predominate over residues 557-576 (IRPHQQQQQHYQQQQQSPRQ). Over residues 658–685 (AANGSAKTANGSANGSANGSAVHAANGG) the composition is skewed to low complexity. Ig-like domains lie at 706–796 (PQFL…FSLN), 806–893 (PEFT…GRVV), 937–1027 (PKFE…ANIA), 1065–1155 (PNFH…ATII), 1199–1281 (FHCE…AELT), 1462–1554 (PKFL…ITVT), 1594–1687 (PPTF…ATIR), 1728–1819 (PAFV…VDIN), 1992–2085 (PPVF…IFLE), 2126–2217 (PTFT…CTVK), 2258–2350 (PKFV…ANFT), 2391–2481 (PQFI…AQLT), 2522–2613 (PKFV…GQLS), 2654–2745 (PSFV…ANVG), 2787–2878 (PQWV…ATVT), 2919–3010 (PNFL…ASIR), 3051–3141 (PAIT…ATLK), 3182–3273 (PRFI…ATIE), 3314–3407 (PAIV…FEVS), and 3448–3539 (PVFI…TKLT). A disulfide bond links Cys827 and Cys877. A disulfide bond links Cys1201 and Cys1265. The cysteines at positions 1618 and 1671 are disulfide-linked. Intrachain disulfides connect Cys2016-Cys2069 and Cys2148-Cys2201. Residues 3567–3583 (EAPRPAREDAPDADHGP) are compositionally biased toward basic and acidic residues. The disordered stretch occupies residues 3567–3590 (EAPRPAREDAPDADHGPPKFTSAL). 5 consecutive Ig-like domains span residues 3584–3677 (PKFT…LKVV), 3720–3811 (PSFS…GKIA), 3821–3913 (PQVV…TKIT), 3962–4052 (PEFR…AKLA), and 4098–4185 (PQFT…ATLD). Cystine bridges form between Cys3606–Cys3659 and Cys3742–Cys3795. The required for F-actin binding stretch occupies residues 4193–4963 (RQTKLRPANF…TSQAKLTLSR (771 aa)). The span at 4319-4329 (DQQEVGWERPD) shows a compositional bias: basic and acidic residues. Positions 4319 to 4357 (DQQEVGWERPDWAGQDGTSKLPGADEGRFKKLPTPAPEL) are disordered. Ig-like domains lie at 4546–4634 (PTIS…ANLT), 4645–4733 (PDFS…ARLN), 4752–4842 (PRFT…LVLT), and 4872–4960 (PHFI…AKLT).

As to quaternary structure, interacts (via Ig-like domains) with F-actin. As to expression, expressed in the pharyngeal, body wall, and anal depressor muscles. Expression in these muscles is higher in hermaphrodites than in males. Expressed in the vulva and the myoepithelial sheath of the proximal ovary. Expressed in the proximal gonad of males. Not expressed in the dense bodies of the obliquely striated body wall muscle.

The protein localises to the cytoplasm. The protein resides in the myofibril. It is found in the sarcomere. It localises to the cytoskeleton. In terms of biological role, positively regulates actin filament organization and provides mechanical stability to the myofibrils during body wall muscle contraction. Required for the organization of sarcomeric actin filaments and myosin protein myo-3 in striated body wall muscle cells. Not required for assembly of dense bodies, which are a type of integrin-based adhesion structure that link the plasma membrane to thin filaments of myofibrils, in body wall muscle. Not required for the atn-1 protein to localize to the dense bodies. The chain is Kettin homolog from Caenorhabditis elegans.